Here is a 2486-residue protein sequence, read N- to C-terminus: Nonribosomal peptide synthetase nanA (2486 aa).

The segment at 231 to 637 (FSARQPLSPA…GRRGTQVKLR (407 aa)) is adenylation 1. One can recognise a Carrier 1 domain in the interval 786-860 (TDIELKVHAL…DLARSAKETS (75 aa)). An O-(pantetheine 4'-phosphoryl)serine modification is found at Ser-820. The condensation 1 stretch occupies residues 902–1314 (EDAYPCTPLQ…LKSVPRVSSQ (413 aa)). The interval 1339 to 1735 (RAQARKTPLA…GRIGDQMKIR (397 aa)) is adenylation 2. Carrier domains are found at residues 1872–1948 (PPST…SSAS) and 2404–2480 (SSSE…QTQA). Residues Ser-1909 and Ser-2441 each carry the O-(pantetheine 4'-phosphoryl)serine modification. The interval 2404–2480 (SSSETIVEPL…KLARLLQTQA (77 aa)) is condensation 2.

The protein belongs to the NRP synthetase family.

The protein operates within secondary metabolite biosynthesis. Functionally, nonribosomal peptide synthetase; part of the gene cluster that mediates the biosynthesis of the benzazepine alkaloid nanangelenin A which contains an unprecedented 3,4-dihydro-1-benzazepine-2,5-dione-N-prenyl-N-acetoxy-anthranilamide scaffold. The first step of nanangelenin biosynthesis is catalyzed by the indoleamine 2,3-dioxygenase nanC which produces N-formyl-kynurenine through the catabolism of tryptophan. The two-module NRPS nanA then utilizes anthranilate (Ant) and L-kynurenine (L-Kyn) to assemble the dipeptide product nanangelenin B. The first adenylation domain of nanA (A1) loads anthranilate onto the T1 domain, while A2 loads kynurenine, generated through spontaneous nonenzymatic deformylation of the nanC-supplied N-formyl-kynurenine. The peptide bond formation between the tethered amino acids is catalyzed by the first condensation domain (C1) between anthranilate's carbonyl carbon and kynurenine's aliphatic primary amine. The second C domain (C2) catalyzes the final cyclization event between the aromatic amine of kynurenine and the tethered carbonyl carbon, yielding nanangelenin B. The terminal T3 domain enhances the catalytic efficiency of C2, suggesting the T2-tethered Ant-L-Kyn is transferred to T3 prior to cyclization by C2. Once released from nanA, nanangelenin B is then prenylated by the prenyltransferase nanD to form nanangelenin C. Nanangelenin C is then N-hydroxylated by the FAD-dependent monooxygenase nanF and further acetylated by the acetyltransferase nanB to yield nanangelenin F. Finally, the N-methyltransferase nanE methylates the amide nitrogen of 1-benzazepine to convert nanangelenin F into nanangelenin A. NanE is also able to methylate most of the intermediates of the pathway such as nanangelenin B and nanangelenin C to produce nanangelenin D and nanangelenin E, respectively. The sequence is that of Nonribosomal peptide synthetase nanA from Aspergillus nanangensis.